The sequence spans 636 residues: Threonine--tRNA ligase (636 aa).

A TGS domain is found at 1 to 60 (MPIINFNNKEILFNYPISIIEIIKKFDKNLSENCIAAKINGKLLDVSEIINYDGSLELVK). Residues 242–533 (DHRKIGKKLD…ITEEFSGKYP (292 aa)) form a catalytic region. Zn(2+) is bound by residues C333, H384, and H510.

The protein belongs to the class-II aminoacyl-tRNA synthetase family. In terms of assembly, homodimer. Zn(2+) serves as cofactor.

It is found in the cytoplasm. It catalyses the reaction tRNA(Thr) + L-threonine + ATP = L-threonyl-tRNA(Thr) + AMP + diphosphate + H(+). Its function is as follows. Catalyzes the attachment of threonine to tRNA(Thr) in a two-step reaction: L-threonine is first activated by ATP to form Thr-AMP and then transferred to the acceptor end of tRNA(Thr). Also edits incorrectly charged L-seryl-tRNA(Thr). The chain is Threonine--tRNA ligase from Wigglesworthia glossinidia brevipalpis.